A 320-amino-acid chain; its full sequence is 1-aminocyclopropane-1-carboxylate oxidase (320 aa).

A Fe2OG dioxygenase domain is found at 154-254 (PTFGTKVSNY…RMSLASFYNP (101 aa)). 3 residues coordinate Fe cation: His178, Asp180, and His235.

This sequence belongs to the iron/ascorbate-dependent oxidoreductase family. The cofactor is Fe cation.

It carries out the reaction 1-aminocyclopropane-1-carboxylate + L-ascorbate + O2 = ethene + L-dehydroascorbate + hydrogen cyanide + CO2 + 2 H2O. The protein operates within alkene biosynthesis; ethylene biosynthesis via S-adenosyl-L-methionine; ethylene from S-adenosyl-L-methionine: step 2/2. The protein is 1-aminocyclopropane-1-carboxylate oxidase (ACO) of Persea americana (Avocado).